The following is a 207-amino-acid chain: Large ribosomal subunit protein bL25 (207 aa).

Belongs to the bacterial ribosomal protein bL25 family. CTC subfamily. Part of the 50S ribosomal subunit; part of the 5S rRNA/L5/L18/L25 subcomplex. Contacts the 5S rRNA. Binds to the 5S rRNA independently of L5 and L18.

This is one of the proteins that binds to the 5S RNA in the ribosome where it forms part of the central protuberance. The chain is Large ribosomal subunit protein bL25 from Dictyoglomus thermophilum (strain ATCC 35947 / DSM 3960 / H-6-12).